We begin with the raw amino-acid sequence, 505 residues long: Prenylcysteine oxidase 1 (505 aa).

The first 27 residues, 1-27 (MGRVVAELVSSLLGLWLLLCSCGCPEG), serve as a signal peptide directing secretion. Asn196, Asn323, and Asn353 each carry an N-linked (GlcNAc...) asparagine glycan.

Belongs to the prenylcysteine oxidase family. Requires FAD as cofactor. In terms of tissue distribution, widely expressed.

Its subcellular location is the lysosome. It catalyses the reaction an S-polyprenyl-L-cysteine + O2 + H2O = a polyprenal + L-cysteine + H2O2. The enzyme catalyses S-(2E,6E)-farnesyl-L-cysteine + O2 + H2O = (2E,6E)-farnesal + L-cysteine + H2O2. The catalysed reaction is [(2E,6E,10E)-geranylgeranyl]-L-cysteine + O2 + H2O = (2E,6E,10E)-geranylgeranial + L-cysteine + H2O2. In terms of biological role, prenylcysteine oxidase that cleaves the thioether bond of prenyl-L-cysteines, such as farnesylcysteine and geranylgeranylcysteine. Only active against free prenylcysteines and not prenylcysteine residues within prenylated proteins or peptides. Involved in the final step in the degradation of prenylated proteins, by degrading prenylcysteines after the protein has been degraded. The protein is Prenylcysteine oxidase 1 of Homo sapiens (Human).